The primary structure comprises 299 residues: Regucalcin (299 aa).

E18 provides a ligand contact to a divalent metal cation. Residues R101, N103, and E121 each coordinate substrate. A divalent metal cation-binding residues include N154 and D204. D204 (proton donor/acceptor) is an active-site residue. K244 and K253 each carry N6-succinyllysine.

It belongs to the SMP-30/CGR1 family. As to quaternary structure, monomer. Zn(2+) serves as cofactor. It depends on Mn(2+) as a cofactor. Ca(2+) is required as a cofactor. The cofactor is Mg(2+).

It is found in the cytoplasm. The enzyme catalyses D-glucono-1,5-lactone + H2O = D-gluconate + H(+). It participates in cofactor biosynthesis; L-ascorbate biosynthesis via UDP-alpha-D-glucuronate pathway; L-ascorbate from UDP-alpha-D-glucuronate: step 3/4. Its function is as follows. Gluconolactonase with low activity towards other sugar lactones, including gulonolactone and galactonolactone. Catalyzes a key step in ascorbic acid (vitamin C) biosynthesis. Can also hydrolyze diisopropyl phosphorofluoridate and phenylacetate (in vitro). Calcium-binding protein. Modulates Ca(2+) signaling, and Ca(2+)-dependent cellular processes and enzyme activities. This is Regucalcin (RGN) from Bos taurus (Bovine).